The following is a 1363-amino-acid chain: Clustered mitochondria protein homolog (1363 aa).

TPR repeat units follow at residues 29–63 and 120–154; these read LPSFFNVGDDYLTIPSSYEENIADLKQALNIIVLC and KEKSYNLASIYEQISRFREVIGLHYIDRLSNDIGS. The interval 172 to 191 is disordered; the sequence is KEAKKEESTEKEQQEKEELS. The TPR 3 repeat unit spans residues 283-316; it reads STINFNPTIKINEKGKFNKSYLLYDLVCQLSPLF. The 271-residue stretch at 361 to 631 folds into the Clu domain; sequence DLSRSQLSSL…RTTPRDIEFI (271 aa). The tract at residues 521–544 is disordered; it reads PVITSPTTDAEGKNEAEEPESEPV. The TPR 4 repeat unit spans residues 548–581; it reads VYGLSSDGSRILEDKSFEEPLKQIGDFFHLKPHK. A compositionally biased stretch (basic and acidic residues) spans 799 to 832; the sequence is AKAEKKREEEKEKEEKEATESEDKKEKKEDKEDA. The tract at residues 799–844 is disordered; it reads AKAEKKREEEKEKEEKEATESEDKKEKKEDKEDAEKEEAEAEEEVP. The segment covering 833-842 has biased composition (acidic residues); that stretch reads EKEEAEAEEE. TPR repeat units lie at residues 1057 to 1090, 1141 to 1174, 1183 to 1216, and 1225 to 1258; these read VEEIYSNARSHLVQGNKEMGMALFNELLAINESI, ITAYMNSAYYESSNEQYLNSLKLYKEAMNTWSLV, INTLTNLSESLLKIKAYDSALELLQEALEITKKL, and GFIYYRIANIVVTLNKFKESKELFDKAYDIFMKL. Positions 1291–1363 are disordered; sequence QQETQKKSKT…SGSKKSNKKK (73 aa). Positions 1330-1342 are enriched in polar residues; the sequence is PPQSNPEIANQSI.

Belongs to the CLU family. As to quaternary structure, may associate with the eukaryotic translation initiation factor 3 (eIF-3) complex.

It localises to the cytoplasm. Functionally, mRNA-binding protein involved in proper cytoplasmic distribution of mitochondria. The chain is Clustered mitochondria protein homolog from Candida albicans (strain SC5314 / ATCC MYA-2876) (Yeast).